We begin with the raw amino-acid sequence, 295 residues long: Guided entry of tail-anchored proteins factor CAMLG (295 aa).

Disordered stretches follow at residues 1 to 73 (MEPM…ILNP) and 127 to 148 (GVEL…RGSH). Over 1-188 (MEPMPSATDG…RTTEEFDSFR (188 aa)) the chain is Cytoplasmic. The span at 15-24 (ATPSGLSASQ) shows a compositional bias: polar residues. Residue serine 53 is modified to Phosphoserine. A compositionally biased stretch (basic and acidic residues) spans 127 to 138 (GVELRQRNRGDL). The chain crosses the membrane as a helical span at residues 189–206 (IFRLVGCALLALVVRAFV). Over 207–208 (CK) the chain is Lumenal. A disulfide bridge links cysteine 207 with cysteine 283. Residues 209–227 (YLSIFAPFLTLQLAYMGLY) traverse the membrane as a helical segment. The Cytoplasmic portion of the chain corresponds to 228–268 (KYFPKGEKKVKTTVLTAALLLSGIPAEVINRSMDTYSKMGE). A helical membrane pass occupies residues 269–287 (VFTDLCVYFFTFIFCHEVL). The Lumenal portion of the chain corresponds to 288–295 (EYWGPEVP).

In terms of assembly, component of the Golgi to ER traffic (GET) complex, which is composed of GET1/WRB, CAMLG/GET2 and GET3/TRC40. Within the complex, GET1 and CAMLG form a heterotetramer which is stabilized by phosphatidylinositol binding and which binds to the GET3 homodimer. Interacts (via C-terminus) with GET1. Interacts (via N-terminus) with GET3. GET3 shows a higher affinity for CAMLG than for GET1. Interacts (via N-terminus) with TNFRSF13B/TACI (via C-terminus). In terms of tissue distribution, in the central nervous system, expressed in astrocytes, microglia and neurons (at protein level).

The protein resides in the endoplasmic reticulum membrane. In terms of biological role, required for the post-translational delivery of tail-anchored (TA) proteins to the endoplasmic reticulum. Together with GET1/WRB, acts as a membrane receptor for soluble GET3/TRC40, which recognizes and selectively binds the transmembrane domain of TA proteins in the cytosol. Required for the stability of GET1. Stimulates calcium signaling in T cells through its involvement in elevation of intracellular calcium. Essential for the survival of peripheral follicular B cells. The sequence is that of Guided entry of tail-anchored proteins factor CAMLG from Rattus norvegicus (Rat).